Consider the following 148-residue polypeptide: Ubiquitin-conjugating enzyme E2 28 (148 aa).

One can recognise a UBC core domain in the interval methionine 1–methionine 147. Cysteine 85 (glycyl thioester intermediate) is an active-site residue.

The protein belongs to the ubiquitin-conjugating enzyme family. As to quaternary structure, interacts with SINAT5. As to expression, expressed in seeds, pistils, siliques, hypocotyls and leaves.

It catalyses the reaction S-ubiquitinyl-[E1 ubiquitin-activating enzyme]-L-cysteine + [E2 ubiquitin-conjugating enzyme]-L-cysteine = [E1 ubiquitin-activating enzyme]-L-cysteine + S-ubiquitinyl-[E2 ubiquitin-conjugating enzyme]-L-cysteine.. It functions in the pathway protein modification; protein ubiquitination. In terms of biological role, accepts the ubiquitin from the E1 complex and catalyzes its covalent attachment to other proteins. This is Ubiquitin-conjugating enzyme E2 28 from Arabidopsis thaliana (Mouse-ear cress).